Reading from the N-terminus, the 510-residue chain is Serine/threonine-protein kinase RIO3 (510 aa).

Disordered regions lie at residues 100-126 (GSSS…ENED) and 143-191 (DEEN…DMVG). Basic and acidic residues-rich tracts occupy residues 108-118 (TPDRYHPKTMQ) and 162-179 (TKHD…KTFN). Positions 235–510 (LLLLKWINQG…RGISPAREYN (276 aa)) constitute a Protein kinase domain. Residues 241 to 249 (INQGVFDSV) and Lys-275 contribute to the ATP site. Residue Asp-388 is the Proton acceptor of the active site. The segment covering 474-499 (RSVDLRHDKSRPADMELKKYNEEKKA) has biased composition (basic and acidic residues). Residues 474–510 (RSVDLRHDKSRPADMELKKYNEEKKANRGISPAREYN) are disordered.

This sequence belongs to the protein kinase superfamily. RIO-type Ser/Thr kinase family. It depends on Mg(2+) as a cofactor. Expressed in tail neurons (PVQ and PHAL/PQR).

It catalyses the reaction L-seryl-[protein] + ATP = O-phospho-L-seryl-[protein] + ADP + H(+). The enzyme catalyses L-threonyl-[protein] + ATP = O-phospho-L-threonyl-[protein] + ADP + H(+). The protein is Serine/threonine-protein kinase RIO3 (riok-3) of Caenorhabditis elegans.